Here is a 737-residue protein sequence, read N- to C-terminus: Dynein axonemal intermediate chain 7 homolog (737 aa).

A compositionally biased stretch (polar residues) spans 1-15 (MPPKSPNRSGKSTPT). Disordered regions lie at residues 1–61 (MPPK…ERRA), 274–362 (KKVK…DDEE), and 410–452 (STVK…QQPP). Basic and acidic residues-rich tracts occupy residues 18-61 (RPGE…ERRA), 276-316 (VKDE…EGRQ), and 333-349 (EETKKDENEGEKEDAVK). 2 stretches are compositionally biased toward polar residues: residues 417-429 (DNPNTGRSSSRVA) and 441-451 (PSKTPLEQQQP).

It belongs to the DNAI7 family.

The polypeptide is Dynein axonemal intermediate chain 7 homolog (AXP83.9) (Ciona intestinalis (Transparent sea squirt)).